An 84-amino-acid chain; its full sequence is Cell division topological specificity factor (84 aa).

The protein belongs to the MinE family.

Functionally, prevents the cell division inhibition by proteins MinC and MinD at internal division sites while permitting inhibition at polar sites. This ensures cell division at the proper site by restricting the formation of a division septum at the midpoint of the long axis of the cell. The polypeptide is Cell division topological specificity factor (Ralstonia nicotianae (strain ATCC BAA-1114 / GMI1000) (Ralstonia solanacearum)).